Consider the following 149-residue polypeptide: Lipoprotein signal peptidase (149 aa).

The next 2 membrane-spanning stretches (helical) occupy residues 58–78 (WFFI…LIRL) and 85–105 (ASLA…DRAM). Residues Asp111 and Asp127 contribute to the active site. The chain crosses the membrane as a helical span at residues 122–142 (IFNVADMAITIGVGILLLDVF).

This sequence belongs to the peptidase A8 family.

The protein resides in the cell membrane. The catalysed reaction is Release of signal peptides from bacterial membrane prolipoproteins. Hydrolyzes -Xaa-Yaa-Zaa-|-(S,diacylglyceryl)Cys-, in which Xaa is hydrophobic (preferably Leu), and Yaa (Ala or Ser) and Zaa (Gly or Ala) have small, neutral side chains.. It participates in protein modification; lipoprotein biosynthesis (signal peptide cleavage). Functionally, this protein specifically catalyzes the removal of signal peptides from prolipoproteins. The protein is Lipoprotein signal peptidase of Brevibacillus brevis (strain 47 / JCM 6285 / NBRC 100599).